A 1031-amino-acid polypeptide reads, in one-letter code: Translation initiation factor IF-2 (1031 aa).

Disordered stretches follow at residues 33-369 (KSHS…GDVL) and 388-436 (LKPL…AESL). Residues 45–56 (ELVRSKLSEPRV) are compositionally biased toward basic and acidic residues. Low complexity predominate over residues 96-105 (PAPAQQQAAA). Polar residues predominate over residues 108 to 123 (ASSSKPSPQRPDQLSS). Over residues 148 to 171 (PAAQEPQPAAASTRPEAAAKAGSP) the composition is skewed to low complexity. A compositionally biased stretch (pro residues) spans 184 to 200 (VLPPPRRAASGPEPPQR). Positions 250–281 (TRPEPRSPVAKKEESSDSGKADEAPRPQRRLE) are enriched in basic and acidic residues. Residues 286–299 (PTRPVAKPLPPEPD) show a composition bias toward pro residues. The segment covering 419–435 (RPSASAEATAPEAAAES) has biased composition (low complexity). The region spanning 522–695 (PRPPVVTIMG…LLVADVAELQ (174 aa)) is the tr-type G domain. A G1 region spans residues 531–538 (GHVDHGKT). 531–538 (GHVDHGKT) contacts GTP. Residues 556-560 (GITQR) are G2. A G3 region spans residues 581–584 (DTPG). Residues 581-585 (DTPGH) and 635-638 (NKID) contribute to the GTP site. Residues 635–638 (NKID) are G4. Residues 671-673 (SAL) are G5.

This sequence belongs to the TRAFAC class translation factor GTPase superfamily. Classic translation factor GTPase family. IF-2 subfamily.

The protein localises to the cytoplasm. One of the essential components for the initiation of protein synthesis. Protects formylmethionyl-tRNA from spontaneous hydrolysis and promotes its binding to the 30S ribosomal subunits. Also involved in the hydrolysis of GTP during the formation of the 70S ribosomal complex. This Synechococcus sp. (strain JA-3-3Ab) (Cyanobacteria bacterium Yellowstone A-Prime) protein is Translation initiation factor IF-2.